The sequence spans 226 residues: ATP synthase F(0) complex subunit a (226 aa).

The next 6 helical transmembrane spans lie at Phe6–Phe26, Trp68–Leu88, Gln97–Phe117, Val138–Val158, Ile164–Ile184, and Phe193–Val213.

The protein belongs to the ATPase A chain family. As to quaternary structure, component of the ATP synthase complex composed at least of ATP5F1A/subunit alpha, ATP5F1B/subunit beta, ATP5MC1/subunit c (homooctomer), MT-ATP6/subunit a, MT-ATP8/subunit 8, ATP5ME/subunit e, ATP5MF/subunit f, ATP5MG/subunit g, ATP5MK/subunit k, ATP5MJ/subunit j, ATP5F1C/subunit gamma, ATP5F1D/subunit delta, ATP5F1E/subunit epsilon, ATP5PF/subunit F6, ATP5PB/subunit b, ATP5PD/subunit d, ATP5PO/subunit OSCP. ATP synthase complex consists of a soluble F(1) head domain (subunits alpha(3) and beta(3)) - the catalytic core - and a membrane F(0) domain - the membrane proton channel (subunits c, a, 8, e, f, g, k and j). These two domains are linked by a central stalk (subunits gamma, delta, and epsilon) rotating inside the F1 region and a stationary peripheral stalk (subunits F6, b, d, and OSCP). Interacts with DNAJC30; interaction is direct.

The protein localises to the mitochondrion inner membrane. The enzyme catalyses H(+)(in) = H(+)(out). Subunit a, of the mitochondrial membrane ATP synthase complex (F(1)F(0) ATP synthase or Complex V) that produces ATP from ADP in the presence of a proton gradient across the membrane which is generated by electron transport complexes of the respiratory chain. ATP synthase complex consist of a soluble F(1) head domain - the catalytic core - and a membrane F(1) domain - the membrane proton channel. These two domains are linked by a central stalk rotating inside the F(1) region and a stationary peripheral stalk. During catalysis, ATP synthesis in the catalytic domain of F(1) is coupled via a rotary mechanism of the central stalk subunits to proton translocation. With the subunit c (ATP5MC1), forms the proton-conducting channel in the F(0) domain, that contains two crucial half-channels (inlet and outlet) that facilitate proton movement from the mitochondrial intermembrane space (IMS) into the matrix. Protons are taken up via the inlet half-channel and released through the outlet half-channel, following a Grotthuss mechanism. The chain is ATP synthase F(0) complex subunit a from Osphranter robustus (Wallaroo).